Consider the following 66-residue polypeptide: Large ribosomal subunit protein bL31 (66 aa).

The Zn(2+) site is built by cysteine 16, cysteine 18, cysteine 36, and cysteine 39.

The protein belongs to the bacterial ribosomal protein bL31 family. Type A subfamily. As to quaternary structure, part of the 50S ribosomal subunit. It depends on Zn(2+) as a cofactor.

Binds the 23S rRNA. This is Large ribosomal subunit protein bL31 from Natranaerobius thermophilus (strain ATCC BAA-1301 / DSM 18059 / JW/NM-WN-LF).